We begin with the raw amino-acid sequence, 382 residues long: RNA binding protein fox-1 homolog 1-like (382 aa).

Disordered regions lie at residues 34 to 79 (QEAG…AAHP) and 94 to 148 (GPQH…QPKR). The segment covering 49 to 65 (YAPPPSYPPPGQAPPTP) has biased composition (pro residues). Positions 101 to 110 (ESITASNTDD) are enriched in polar residues. One can recognise an RRM domain in the interval 147-223 (KRLHVSNIPF…RKIEVNNATA (77 aa)).

Expressed during muscle development in adaxial cells, somites, cardiac precursors, finbuds and jaw muscle cells.

It is found in the nucleus. Functionally, RNA-binding protein that regulates alternative splicing events by binding to 5'-GCAUG-3' elements. Regulates alternative splicing of tissue-specific exons. In Danio rerio (Zebrafish), this protein is RNA binding protein fox-1 homolog 1-like (rbfox1l).